Here is a 394-residue protein sequence, read N- to C-terminus: Probable peptidoglycan glycosyltransferase FtsW (394 aa).

The Cytoplasmic segment spans residues 1–26 (MNTMRPRHLNQRGKPVSRPISLYDKW). A helical transmembrane segment spans residues 27–47 (LIGAVFGLLIIGLMMVASSSV). Over 48–57 (MISTKYFHQP) the chain is Periplasmic. Residues 58–78 (FHFLIRQACYLFVGLLLALIV) form a helical membrane-spanning segment. Over 79-88 (VRTDSSFWEK) the chain is Cytoplasmic. Residues 89–109 (ISMPMMIGCVFLLLIVLIPGI) form a helical membrane-spanning segment. Residues 110-118 (GKSVNGSRR) lie on the Periplasmic side of the membrane. A helical transmembrane segment spans residues 119–139 (WLALGPIGVQVSELTKLAMIF). At 140–154 (YLSGYLVRQQEAVCE) the chain is on the cytoplasmic side. The chain crosses the membrane as a helical span at residues 155–175 (SIFGFIKPMAILAVVSVLLLL). The Periplasmic portion of the chain corresponds to 176 to 177 (EP). The chain crosses the membrane as a helical span at residues 178–198 (DFGATVVISGTVMAMLFLAGV). The Cytoplasmic segment spans residues 199–201 (KLR). The helical transmembrane segment at 202–222 (YYFGLMLVVVTALALLAVSSP) threads the bilayer. Topologically, residues 223 to 278 (YRVARLTAFLDPWADQYNSGYQLTQSLIAFGRGGWFGTGLGESIQKLLYLPEAHTD) are periplasmic. Residues 279–299 (FLFAVIAEELGLFGILVVITL) traverse the membrane as a helical segment. Topologically, residues 300 to 327 (YSILVIRGLNIGYTAYTQERHFASYTAY) are cytoplasmic. Residues 328–348 (GLTIWLALQASINMGVNAGLL) form a helical membrane-spanning segment. Over 349-354 (PTKGLT) the chain is Periplasmic. The chain crosses the membrane as a helical span at residues 355–375 (LPLLSYGGASMVINCIVIALL). Over 376-394 (LRIDHENRWQSLGLRPLTA) the chain is Cytoplasmic.

This sequence belongs to the SEDS family. FtsW subfamily.

The protein localises to the cell inner membrane. The catalysed reaction is [GlcNAc-(1-&gt;4)-Mur2Ac(oyl-L-Ala-gamma-D-Glu-L-Lys-D-Ala-D-Ala)](n)-di-trans,octa-cis-undecaprenyl diphosphate + beta-D-GlcNAc-(1-&gt;4)-Mur2Ac(oyl-L-Ala-gamma-D-Glu-L-Lys-D-Ala-D-Ala)-di-trans,octa-cis-undecaprenyl diphosphate = [GlcNAc-(1-&gt;4)-Mur2Ac(oyl-L-Ala-gamma-D-Glu-L-Lys-D-Ala-D-Ala)](n+1)-di-trans,octa-cis-undecaprenyl diphosphate + di-trans,octa-cis-undecaprenyl diphosphate + H(+). The protein operates within cell wall biogenesis; peptidoglycan biosynthesis. In terms of biological role, peptidoglycan polymerase that is essential for cell division. In Legionella pneumophila subsp. pneumophila (strain Philadelphia 1 / ATCC 33152 / DSM 7513), this protein is Probable peptidoglycan glycosyltransferase FtsW.